Consider the following 714-residue polypeptide: Pre-mRNA-splicing factor CLF1 (714 aa).

12 HAT repeats span residues 48–80 (SFQL…WEVK), 83–115 (HDFP…FELS), 117–149 (KNIT…TEET), 151–182 (KNYQ…YEKR), 184–215 (DEYD…FEMN), 265–305 (KEYE…FEKS), 315–347 (SIMI…ILQQ), 349–384 (DNNE…IWVK), 394–430 (GSIE…FEIR), 435–470 (NGLA…LEQK), 472–510 (GEWD…FEKN), and 555–586 (MRYA…FESS).

The protein belongs to the crooked-neck family. In terms of assembly, associated with the spliceosome.

The protein resides in the nucleus. Functionally, involved in pre-mRNA splicing and cell cycle progression. Required for the spliceosome assembly and initiation of the DNA replication. The chain is Pre-mRNA-splicing factor CLF1 (CLF1) from Debaryomyces hansenii (strain ATCC 36239 / CBS 767 / BCRC 21394 / JCM 1990 / NBRC 0083 / IGC 2968) (Yeast).